We begin with the raw amino-acid sequence, 151 residues long: Cytochrome c oxidase-assembly factor COX23, mitochondrial (151 aa).

A mitochondrion-targeting transit peptide spans 1 to 10 (MEKPSPTRRQ). Residues 1–86 (MEKPSPTRRQ…QYYPDDPENP (86 aa)) are disordered. The segment covering 7 to 18 (TRRQTSSLSTIS) has biased composition (polar residues). The span at 19–51 (NGMTMTNDNRDTTNTNSGSTSSNNSQPSSSSTP) shows a compositional bias: low complexity. Residues 101-143 (YDPCEESSKLSFQCLERNDYDRSKCQEYFDAYRECKKQWLTAR) enclose the CHCH domain. 2 short sequence motifs (cx9C motif) span residues 104–114 (CEESSKLSFQC) and 125–135 (CQEYFDAYREC). Intrachain disulfides connect Cys104–Cys135 and Cys114–Cys125.

Belongs to the COX23 family.

The protein resides in the cytoplasm. The protein localises to the mitochondrion intermembrane space. Required for the assembly of cytochrome c oxidase. The polypeptide is Cytochrome c oxidase-assembly factor COX23, mitochondrial (COX23) (Saccharomyces cerevisiae (strain ATCC 204508 / S288c) (Baker's yeast)).